We begin with the raw amino-acid sequence, 394 residues long: Protein TsgA homolog (394 aa).

12 consecutive transmembrane segments (helical) span residues 11–31, 51–71, 76–96, 101–121, 134–154, 162–182, 206–226, 246–266, 274–294, 302–322, 334–354, and 363–383; these read WISY…GIVM, FLNA…EIIP, LVFG…GHNL, ISMF…TFLV, LLFT…AAAM, WYWV…LTLC, VGVL…LGFI, QLVS…SFIL, IVTV…STDN, ILAL…LGSL, FILT…GPIV, and LETA…LGFF.

The protein belongs to the major facilitator superfamily. TsgA family.

It is found in the cell inner membrane. The polypeptide is Protein TsgA homolog (Yersinia pestis bv. Antiqua (strain Antiqua)).